Here is a 240-residue protein sequence, read N- to C-terminus: Ribosomal RNA large subunit methyltransferase E (240 aa).

Over residues 1–20 (MSKAGGNKGGSRTGGRGGAG) the composition is skewed to gly residues. The disordered stretch occupies residues 1-40 (MSKAGGNKGGSRTGGRGGAGSSNLHVRVKKKAGTTKESSR). S-adenosyl-L-methionine is bound by residues Gly-92, Trp-94, Asp-115, Asp-131, and Asp-155. Lys-195 serves as the catalytic Proton acceptor.

This sequence belongs to the class I-like SAM-binding methyltransferase superfamily. RNA methyltransferase RlmE family.

The protein localises to the cytoplasm. The enzyme catalyses uridine(2552) in 23S rRNA + S-adenosyl-L-methionine = 2'-O-methyluridine(2552) in 23S rRNA + S-adenosyl-L-homocysteine + H(+). Specifically methylates the uridine in position 2552 of 23S rRNA at the 2'-O position of the ribose in the fully assembled 50S ribosomal subunit. This chain is Ribosomal RNA large subunit methyltransferase E, found in Brucella ovis (strain ATCC 25840 / 63/290 / NCTC 10512).